The chain runs to 493 residues: Cytochrome c-552 (493 aa).

Positions 1-25 are cleaved as a signal peptide; it reads MEKKLKSWQGWLLSGGSMVVVFVLG. Residue His116 coordinates heme c. Positions 144, 147, and 148 each coordinate heme. Heme c is bound by residues Cys182, Cys185, His186, Cys224, Cys227, and His228. 4 residues coordinate Ca(2+): Glu230, Tyr231, Lys276, and Gln278. Residue Tyr231 participates in substrate binding. Position 279 (His279) interacts with substrate. His290, Cys297, Cys300, His301, His315, Cys328, Cys331, His332, and His407 together coordinate heme c.

It belongs to the cytochrome c-552 family. Ca(2+) is required as a cofactor. Requires heme c as cofactor.

It is found in the periplasm. It carries out the reaction 6 Fe(III)-[cytochrome c] + NH4(+) + 2 H2O = 6 Fe(II)-[cytochrome c] + nitrite + 8 H(+). Its pathway is nitrogen metabolism; nitrate reduction (assimilation). Catalyzes the reduction of nitrite to ammonia, consuming six electrons in the process. The polypeptide is Cytochrome c-552 (Bacteroides thetaiotaomicron (strain ATCC 29148 / DSM 2079 / JCM 5827 / CCUG 10774 / NCTC 10582 / VPI-5482 / E50)).